The primary structure comprises 622 residues: Wall-associated receptor kinase-like 21 (622 aa).

Positions 1–21 are cleaved as a signal peptide; the sequence is MAETPQPYLIFVFFVFTLTVA. Residues 22-247 are Extracellular-facing; sequence TQTTGSVKCK…LVYKRKGLHK (226 aa). 5 N-linked (GlcNAc...) asparagine glycosylation sites follow: Asn-50, Asn-114, Asn-131, Asn-160, and Asn-195. A helical transmembrane segment spans residues 248-268; that stretch reads LVVLGTAGILVGVLVIVVLIA. Topologically, residues 269 to 622 are cytoplasmic; that stretch reads TYFFRNKQSA…MKRQQSFPRE (354 aa). Positions 314–594 constitute a Protein kinase domain; that stretch reads FSDKNMLGTG…EITEDLHRIK (281 aa). ATP contacts are provided by residues 320–328 and Lys-342; that span reads LGTGAYGTV. The active-site Proton acceptor is Asp-439.

The protein belongs to the protein kinase superfamily. Ser/Thr protein kinase family.

Its subcellular location is the membrane. It catalyses the reaction L-seryl-[protein] + ATP = O-phospho-L-seryl-[protein] + ADP + H(+). The catalysed reaction is L-threonyl-[protein] + ATP = O-phospho-L-threonyl-[protein] + ADP + H(+). Its function is as follows. Serine/threonine-protein kinase that may function as a signaling receptor of extracellular matrix component. The chain is Wall-associated receptor kinase-like 21 (WAKL21) from Arabidopsis thaliana (Mouse-ear cress).